The chain runs to 467 residues: Hydroxyacid-oxoacid transhydrogenase, mitochondrial (467 aa).

Position 445 is an N6-acetyllysine (K445). S452 is subject to Phosphoserine.

It belongs to the iron-containing alcohol dehydrogenase family. Hydroxyacid-oxoacid transhydrogenase subfamily. In terms of tissue distribution, only expressed in adult liver.

The protein localises to the mitochondrion. It catalyses the reaction (S)-3-hydroxybutanoate + 2-oxoglutarate = (R)-2-hydroxyglutarate + acetoacetate. The enzyme catalyses 4-hydroxybutanoate + 2-oxoglutarate = (R)-2-hydroxyglutarate + succinate semialdehyde. Its function is as follows. Catalyzes the cofactor-independent reversible oxidation of gamma-hydroxybutyrate (GHB) to succinic semialdehyde (SSA) coupled to reduction of 2-ketoglutarate (2-KG) to D-2-hydroxyglutarate (D-2-HG). D,L-3-hydroxyisobutyrate and L-3-hydroxybutyrate (L-3-OHB) are also substrates for HOT with 10-fold lower activities. The protein is Hydroxyacid-oxoacid transhydrogenase, mitochondrial (ADHFE1) of Homo sapiens (Human).